We begin with the raw amino-acid sequence, 270 residues long: Glutamate racemase (270 aa).

Residues 7 to 8 (DS) and 39 to 40 (YG) contribute to the substrate site. Cys-70 functions as the Proton donor/acceptor in the catalytic mechanism. 71–72 (NT) is a binding site for substrate. Catalysis depends on Cys-194, which acts as the Proton donor/acceptor. 195–196 (TH) is a binding site for substrate.

This sequence belongs to the aspartate/glutamate racemases family.

The enzyme catalyses L-glutamate = D-glutamate. Its pathway is cell wall biogenesis; peptidoglycan biosynthesis. Functionally, provides the (R)-glutamate required for cell wall biosynthesis. This chain is Glutamate racemase, found in Cereibacter sphaeroides (strain ATCC 17023 / DSM 158 / JCM 6121 / CCUG 31486 / LMG 2827 / NBRC 12203 / NCIMB 8253 / ATH 2.4.1.) (Rhodobacter sphaeroides).